Reading from the N-terminus, the 349-residue chain is 3-dehydroquinate synthase (349 aa).

NAD(+) contacts are provided by residues 63–68 (DGEDYK), 97–101 (GVIGD), 121–122 (TT), K134, K143, and 161–164 (FLQT). Zn(2+) is bound by residues E176, H235, and H252.

It belongs to the sugar phosphate cyclases superfamily. Dehydroquinate synthase family. Requires Co(2+) as cofactor. It depends on Zn(2+) as a cofactor. The cofactor is NAD(+).

It is found in the cytoplasm. The catalysed reaction is 7-phospho-2-dehydro-3-deoxy-D-arabino-heptonate = 3-dehydroquinate + phosphate. It functions in the pathway metabolic intermediate biosynthesis; chorismate biosynthesis; chorismate from D-erythrose 4-phosphate and phosphoenolpyruvate: step 2/7. In terms of biological role, catalyzes the conversion of 3-deoxy-D-arabino-heptulosonate 7-phosphate (DAHP) to dehydroquinate (DHQ). This chain is 3-dehydroquinate synthase, found in Nitratiruptor sp. (strain SB155-2).